A 644-amino-acid polypeptide reads, in one-letter code: Chaperone protein DnaK (644 aa).

Residue Thr-195 is modified to Phosphothreonine; by autocatalysis. A disordered region spans residues 598–644; sequence KQAAPGAGAPGAGPGPEAAGGAQQAQAEPKKDEGVIDAEYVDVDEKK. Low complexity predominate over residues 612 to 624; sequence GPEAAGGAQQAQA. Positions 632–644 are enriched in acidic residues; it reads VIDAEYVDVDEKK.

The protein belongs to the heat shock protein 70 family.

Functionally, acts as a chaperone. This is Chaperone protein DnaK from Koribacter versatilis (strain Ellin345).